Consider the following 130-residue polypeptide: Organ-specific protein P4 (130 aa).

2 repeat units span residues 60-85 (HAKE…DNEI) and 86-111 (HANE…DNEI). The tract at residues 60–111 (HAKENKGAIGEFEPCPNASAYGDNEIHANENKGAIGEFETRPNGSAYGDNEI) is 2 X 26 AA tandem repeats. Residues 79–130 (AYGDNEIHANENKGAIGEFETRPNGSAYGDNEIGAEFTDDFEPRPSMTKYNA) are disordered.

To organ specific protein S2. As to expression, expressed in pods.

This is Organ-specific protein P4 from Pisum sativum (Garden pea).